The primary structure comprises 96 residues: Molybdopterin synthase sulfur carrier subunit (96 aa).

G96 carries the 1-thioglycine; alternate modification. At G96 the chain carries Glycyl adenylate; alternate.

Belongs to the MoaD family. MOCS2A subfamily. As to quaternary structure, heterotetramer; composed of 2 small (MOCS2A) and 2 large (MOCS2B) subunits. C-terminal thiocarboxylation occurs in 2 steps, it is first acyl-adenylated (-COAMP) via the hesA/moeB/thiF part of MOCS3, then thiocarboxylated (-COSH) via the rhodanese domain of MOCS3.

The protein resides in the cytoplasm. The protein operates within cofactor biosynthesis; molybdopterin biosynthesis. Its function is as follows. Acts as a sulfur carrier required for molybdopterin biosynthesis. Component of the molybdopterin synthase complex that catalyzes the conversion of precursor Z into molybdopterin by mediating the incorporation of 2 sulfur atoms into precursor Z to generate a dithiolene group. In the complex, serves as sulfur donor by being thiocarboxylated (-COSH) at its C-terminus by MOCS3. After interaction with MOCS2B, the sulfur is then transferred to precursor Z to form molybdopterin. The sequence is that of Molybdopterin synthase sulfur carrier subunit from Arabidopsis thaliana (Mouse-ear cress).